The following is a 559-amino-acid chain: ADP,ATP carrier protein 1 (559 aa).

Polar residues predominate over residues 1 to 10 (MNEVENNNHS). The segment at 1 to 22 (MNEVENNNHSFPREDIPTEDEI) is disordered. Residue Asn8 is glycosylated (N-linked (GlcNAc...) asparagine). Helical transmembrane passes span 46-66 (FALLGLMFGIIGFIYSFMRIL), 79-99 (TILFIKIFYILPVSMALVFLI), 111-131 (IFSIFCGGFASLFFLCGAVFL), and 174-194 (IVFISAEMWGSLVLSYLFLSF). Asn196 is a glycosylation site (N-linked (GlcNAc...) asparagine). 2 helical membrane passes run 210–230 (PLIIITNVSLFLSATVAGAFF) and 242–262 (QVLLSGIFIFQGFLVVLVIFL). An N-linked (GlcNAc...) asparagine glycan is attached at Asn290. A run of 3 helical transmembrane segments spans residues 305 to 325 (LLLAMSLIVLFFNISYNMVES), 354 to 373 (QYMTSVVVICLNLSPFSSYV), and 377 to 397 (GFLLVGLITPIVTLMAIVLFL). An N-linked (GlcNAc...) asparagine glycan is attached at Asn403. 3 helical membrane-spanning segments follow: residues 425-447 (YVLENYFGVIFMSLLKITKYSAF), 473-493 (IFGKLGKSIGSIYGLLMFEAL), and 503-523 (PITAGIIFIFIVMWVKAIIYL).

This sequence belongs to the ADP/ATP translocase tlc family.

The protein resides in the cell membrane. Its function is as follows. ATP transporter involved in the uptake of ATP from the host cell cytoplasm. Provides the microsporidian cell with host ATP in exchange for ADP. This is an obligate exchange system. This energy acquiring activity is an important component of microsporidian parasitism. The sequence is that of ADP,ATP carrier protein 1 (NTT1) from Encephalitozoon cuniculi (strain GB-M1) (Microsporidian parasite).